The following is a 79-amino-acid chain: Acyl carrier protein (79 aa).

Positions A2 to V77 constitute a Carrier domain. S37 is subject to O-(pantetheine 4'-phosphoryl)serine.

The protein belongs to the acyl carrier protein (ACP) family. Post-translationally, 4'-phosphopantetheine is transferred from CoA to a specific serine of apo-ACP by AcpS. This modification is essential for activity because fatty acids are bound in thioester linkage to the sulfhydryl of the prosthetic group.

It is found in the cytoplasm. It functions in the pathway lipid metabolism; fatty acid biosynthesis. In terms of biological role, carrier of the growing fatty acid chain in fatty acid biosynthesis. The sequence is that of Acyl carrier protein from Endomicrobium trichonymphae.